Reading from the N-terminus, the 92-residue chain is Large ribosomal subunit protein eL43z (92 aa).

The segment at 39-60 (CEFCGKYSVKRKVVGIWGCKDC) adopts a C4-type zinc-finger fold.

Belongs to the eukaryotic ribosomal protein eL43 family.

This chain is Large ribosomal subunit protein eL43z (RPL37AB), found in Arabidopsis thaliana (Mouse-ear cress).